We begin with the raw amino-acid sequence, 384 residues long: N-acetylneuraminate epimerase (384 aa).

The signal sequence occupies residues Met1–Ala24. Kelch repeat units follow at residues Lys46–Gly90, Tyr92–Asp145, Arg147–Asp184, Asp185–Gly230, Val233–Ala281, Gln303–Glu352, and Val354–Ile383. Catalysis depends on Glu239, which acts as the Proton acceptor.

It belongs to the NanM family. Homodimer.

It is found in the periplasm. The enzyme catalyses N-acetyl-alpha-neuraminate = N-acetyl-beta-neuraminate. In terms of biological role, converts alpha-N-acetylneuranimic acid (Neu5Ac) to the beta-anomer, accelerating the equilibrium between the alpha- and beta-anomers. Probably facilitates sialidase-negative bacteria to compete successfully for limited amounts of extracellular Neu5Ac, which is likely taken up in the beta-anomer. In addition, the rapid removal of sialic acid from solution might be advantageous to the bacterium to damp down host responses. The protein is N-acetylneuraminate epimerase of Vibrio cholerae serotype O1 (strain ATCC 39315 / El Tor Inaba N16961).